A 124-amino-acid chain; its full sequence is Non-structural protein 2 (124 aa).

A DLNP; interaction with MAP1B motif is present at residues 121-124 (DLNP).

Belongs to the pneumovirus non-structural protein 2 family. In terms of assembly, monomer (instable). Homomultimer. Heteromultimer with NS1. Interacts with host RIGI (via N-terminus); this interaction prevents host signaling pathway involved in interferon production. Interacts with host MAP1B/microtubule-associated protein 1B.

It is found in the host mitochondrion. In terms of biological role, plays a major role in antagonizing the type I IFN-mediated antiviral response. Acts cooperatively with NS1 to repress activation and nuclear translocation of host IFN-regulatory factor IRF3. Interacts with the host cytoplasmic sensor of viral nucleic acids RIGI and prevents the interaction with its downstream partner MAVS. Together with NS2, participates in the proteasomal degradation of host STAT2, IRF3, IRF7, TBK1 and RIGI through a NS-degradasome involving CUL2 and Elongin-C. The degradasome requires an intact mitochondrial MAVS. Induces host SOCS1 expression. Induces activation of NF-kappa-B. Suppresses premature apoptosis by an NF-kappa-B-dependent, interferon-independent mechanism promoting continued viral replication. The polypeptide is Non-structural protein 2 (1B) (Human respiratory syncytial virus A (strain A2)).